The chain runs to 239 residues: Ribonuclease 3 (239 aa).

In terms of domain architecture, RNase III spans 12-137; it reads RARLETAIGY…LIAAIYLDGG (126 aa). A Mg(2+)-binding site is contributed by Glu50. Asp54 is a catalytic residue. The Mg(2+) site is built by Asp123 and Glu126. Glu126 is an active-site residue. Residues 162–231 form the DRBM domain; that stretch reads DAKTELQEWA…AMRLLEREGV (70 aa).

This sequence belongs to the ribonuclease III family. In terms of assembly, homodimer. Mg(2+) is required as a cofactor.

The protein localises to the cytoplasm. The enzyme catalyses Endonucleolytic cleavage to 5'-phosphomonoester.. Functionally, digests double-stranded RNA. Involved in the processing of primary rRNA transcript to yield the immediate precursors to the large and small rRNAs (23S and 16S). Processes some mRNAs, and tRNAs when they are encoded in the rRNA operon. Processes pre-crRNA and tracrRNA of type II CRISPR loci if present in the organism. In Sinorhizobium fredii (strain NBRC 101917 / NGR234), this protein is Ribonuclease 3.